Here is a 594-residue protein sequence, read N- to C-terminus: Chitooligosaccharidolytic beta-N-acetylglucosaminidase (594 aa).

The signal sequence occupies residues 1-22; that stretch reads MWSRRIPLFIFGVLVLILSVAA. 2 cysteine pairs are disulfide-bonded: C31/C59 and C36/C55. N164 is a glycosylation site (N-linked (GlcNAc...) asparagine). Residues D249 and H303 each act as charge relay system in the active site. Intrachain disulfides connect C316-C373 and C326-C331. The Charge relay system role is filled by E368. The N-linked (GlcNAc...) asparagine glycan is linked to N375. Cystine bridges form between C478–C491 and C585–C592.

It belongs to the glycosyl hydrolase 20 family. In terms of assembly, homodimer.

It catalyses the reaction Hydrolysis of terminal non-reducing N-acetyl-D-hexosamine residues in N-acetyl-beta-D-hexosaminides.. Inhibited by O-(2-acetamido-2-deoxy-D-glucopyransylidene)-amino-N-phenylcarbamate (PUGNAc). Inhibited by thiabendazole (TMG)-chitotriomycin. Inhibited by 6-(dimethylamino)-2-(2-(((5-methyl-1,3,4-thiadiazol-2-yl)methyl)amino)ethyl)- 1H-benzo[de]isoquinoline-1,3(2H)-dione (Q2), a synthesized non-carbohydrate unsymmetrical dyad of naphthalimide and thiadiazole having a dimethylamino group at C4 of the naphthalimide. Inhibited poorly by N-acetyl-glucosamine (NAG)-thiazoline (NGT), but when the thiazoline ring of NGT is replaced by a bulky substituent such as in compound 1,2-dideoxy-2'-methylamino-alpha-D-glucopyranoso-[2,1-d]-Delta2'-thiazoline (NMAGT), the inhibition constant Ki is lowered 600-fold compared to that of NGT. Inhibited by berberine, berberine analogs thalifendine and palmatine, and berberine derivative SYSU-1, but not by berberine analog tetrahydroberberine. Functionally, hydrolyzes one beta-GlcNAc unit at a time from the non-reducing ends of substrates, with a preference for shorter substrates. The 2-acetamido group and the beta-glycoside bond linkage in the substrate are required for its activity. Active with p-nitrophenyl (pNP)-beta-GlcNAc, pNP-beta-GalNAc and chitooligosaccharides (degree of polymerization from 2 to 6), but not with the complex N-glycan substrate (GlcNAcbeta-1,2Manalpha-1,6)(GlcNAcbeta-1,2Manalpha-1,3)Manbeta-1,4GlcNAcbeta-1,4GlcNAc-PA (GnGn-PA), pNP-alpha-GlcNAc or with the long polymer colloidal chitin. Involved in chitin catabolism. Involved in the degradation of old cuticle during the pupation stage. The protein is Chitooligosaccharidolytic beta-N-acetylglucosaminidase of Ostrinia furnacalis (Asian corn borer).